Reading from the N-terminus, the 251-residue chain is Haloacid dehalogenase-like hydrolase domain-containing protein 3 (251 aa).

K15 carries the post-translational modification N6-acetyllysine; alternate. N6-succinyllysine; alternate is present on K15. K130 carries the post-translational modification N6-acetyllysine.

The protein belongs to the HAD-like hydrolase superfamily.

This Mus musculus (Mouse) protein is Haloacid dehalogenase-like hydrolase domain-containing protein 3 (Hdhd3).